A 365-amino-acid polypeptide reads, in one-letter code: Phosphoserine aminotransferase (365 aa).

R42 is a binding site for L-glutamate. Residues 76–77 (AR), W103, T154, D175, and Q198 contribute to the pyridoxal 5'-phosphate site. N6-(pyridoxal phosphate)lysine is present on K199. 242-243 (NT) contacts pyridoxal 5'-phosphate.

It belongs to the class-V pyridoxal-phosphate-dependent aminotransferase family. SerC subfamily. As to quaternary structure, homodimer. Requires pyridoxal 5'-phosphate as cofactor.

It localises to the cytoplasm. The catalysed reaction is O-phospho-L-serine + 2-oxoglutarate = 3-phosphooxypyruvate + L-glutamate. The enzyme catalyses 4-(phosphooxy)-L-threonine + 2-oxoglutarate = (R)-3-hydroxy-2-oxo-4-phosphooxybutanoate + L-glutamate. Its pathway is amino-acid biosynthesis; L-serine biosynthesis; L-serine from 3-phospho-D-glycerate: step 2/3. It participates in cofactor biosynthesis; pyridoxine 5'-phosphate biosynthesis; pyridoxine 5'-phosphate from D-erythrose 4-phosphate: step 3/5. In terms of biological role, catalyzes the reversible conversion of 3-phosphohydroxypyruvate to phosphoserine and of 3-hydroxy-2-oxo-4-phosphonooxybutanoate to phosphohydroxythreonine. The chain is Phosphoserine aminotransferase from Blochmanniella floridana.